The sequence spans 427 residues: Glutamate-1-semialdehyde 2,1-aminomutase (427 aa).

Lys267 bears the N6-(pyridoxal phosphate)lysine mark.

This sequence belongs to the class-III pyridoxal-phosphate-dependent aminotransferase family. HemL subfamily. As to quaternary structure, homodimer. Pyridoxal 5'-phosphate is required as a cofactor.

Its subcellular location is the cytoplasm. The catalysed reaction is (S)-4-amino-5-oxopentanoate = 5-aminolevulinate. It participates in porphyrin-containing compound metabolism; protoporphyrin-IX biosynthesis; 5-aminolevulinate from L-glutamyl-tRNA(Glu): step 2/2. In Geobacter metallireducens (strain ATCC 53774 / DSM 7210 / GS-15), this protein is Glutamate-1-semialdehyde 2,1-aminomutase.